The following is a 459-amino-acid chain: tRNA modification GTPase MnmE (459 aa).

3 residues coordinate (6S)-5-formyl-5,6,7,8-tetrahydrofolate: arginine 22, glutamate 85, and arginine 124. The TrmE-type G domain maps to 221–380 (GLSTVIVGRP…LEIQIKDLFF (160 aa)). Residue asparagine 231 participates in K(+) binding. Residues 231–236 (NVGKSS), 250–256 (TEVAGTT), and 275–278 (DTAG) contribute to the GTP site. Serine 235 is a binding site for Mg(2+). K(+) is bound by residues threonine 250, valine 252, and threonine 255. Threonine 256 contacts Mg(2+). Lysine 459 is a (6S)-5-formyl-5,6,7,8-tetrahydrofolate binding site.

It belongs to the TRAFAC class TrmE-Era-EngA-EngB-Septin-like GTPase superfamily. TrmE GTPase family. As to quaternary structure, homodimer. Heterotetramer of two MnmE and two MnmG subunits. It depends on K(+) as a cofactor.

The protein resides in the cytoplasm. Exhibits a very high intrinsic GTPase hydrolysis rate. Involved in the addition of a carboxymethylaminomethyl (cmnm) group at the wobble position (U34) of certain tRNAs, forming tRNA-cmnm(5)s(2)U34. This Staphylococcus epidermidis (strain ATCC 35984 / DSM 28319 / BCRC 17069 / CCUG 31568 / BM 3577 / RP62A) protein is tRNA modification GTPase MnmE.